The sequence spans 241 residues: uncharacterized protein (241 aa).

The next 7 helical transmembrane spans lie at 12 to 32 (ITEI…LLLL), 39 to 59 (LLWL…EMKF), 89 to 109 (VYDV…ICYT), 117 to 137 (YYTF…NCVV), 152 to 172 (LFEY…ATML), 180 to 200 (IHFY…WFVY), and 215 to 235 (YVEA…SPLI).

This sequence belongs to the mimivirus L68/R809 family.

It is found in the membrane. This is an uncharacterized protein from Acanthamoeba polyphaga mimivirus (APMV).